A 128-amino-acid polypeptide reads, in one-letter code: Cytochrome c-type biogenesis protein CcmE (128 aa).

The Cytoplasmic portion of the chain corresponds to 1–8; the sequence is MQKIVRNR. A helical; Signal-anchor for type II membrane protein transmembrane segment spans residues 9–29; that stretch reads LIKIILCFCSTCLGISIILYN. The Periplasmic portion of the chain corresponds to 30–128; the sequence is LEKNIIFFFP…KHDENYRPPS (99 aa). The heme site is built by His120 and Tyr124.

It belongs to the CcmE/CycJ family.

It localises to the cell inner membrane. In terms of biological role, heme chaperone required for the biogenesis of c-type cytochromes. Transiently binds heme delivered by CcmC and transfers the heme to apo-cytochromes in a process facilitated by CcmF and CcmH. This chain is Cytochrome c-type biogenesis protein CcmE, found in Rickettsia typhi (strain ATCC VR-144 / Wilmington).